Consider the following 708-residue polypeptide: Polyribonucleotide nucleotidyltransferase (708 aa).

Residues aspartate 486 and aspartate 492 each contribute to the Mg(2+) site. In terms of domain architecture, KH spans 553–612 (PRITTIKVPPQKVREVIGSGGKVIREITEVTGTKIDIEDDGTIKIASADAEATQRAVDWI). Residues 622-690 (GVVYTGKVVK…DRGKIKLSMK (69 aa)) enclose the S1 motif domain.

This sequence belongs to the polyribonucleotide nucleotidyltransferase family. The cofactor is Mg(2+).

The protein resides in the cytoplasm. It catalyses the reaction RNA(n+1) + phosphate = RNA(n) + a ribonucleoside 5'-diphosphate. Functionally, involved in mRNA degradation. Catalyzes the phosphorolysis of single-stranded polyribonucleotides processively in the 3'- to 5'-direction. This Rhodospirillum rubrum (strain ATCC 11170 / ATH 1.1.1 / DSM 467 / LMG 4362 / NCIMB 8255 / S1) protein is Polyribonucleotide nucleotidyltransferase.